Reading from the N-terminus, the 326-residue chain is Probable major capsid protein gp17 (326 aa).

The protein belongs to the L5likevirus major capsid protein gp17 family. As to quaternary structure, L5 head shells are composed of gp17 subunits that are extensively cross-linked.

It localises to the virion. The chain is Probable major capsid protein gp17 (17) from Mycobacterium (Mycobacteriophage L5).